The primary structure comprises 443 residues: Phosphoglucosamine mutase (443 aa).

Catalysis depends on Ser102, which acts as the Phosphoserine intermediate. Ser102, Asp241, Asp243, and Asp245 together coordinate Mg(2+). Ser102 is modified (phosphoserine).

The protein belongs to the phosphohexose mutase family. It depends on Mg(2+) as a cofactor. Post-translationally, activated by phosphorylation.

The enzyme catalyses alpha-D-glucosamine 1-phosphate = D-glucosamine 6-phosphate. Its function is as follows. Catalyzes the conversion of glucosamine-6-phosphate to glucosamine-1-phosphate. The protein is Phosphoglucosamine mutase of Albidiferax ferrireducens (strain ATCC BAA-621 / DSM 15236 / T118) (Rhodoferax ferrireducens).